A 105-amino-acid chain; its full sequence is Thioredoxin (105 aa).

Residues 2-105 (VKQIESKYAF…KLEATINELI (104 aa)) form the Thioredoxin domain. Lysine 3 is modified (N6-acetyllysine). Lysine 8 is subject to N6-succinyllysine. Catalysis depends on nucleophile residues cysteine 32 and cysteine 35. Cysteine 32 and cysteine 35 are joined by a disulfide. Lysine 39 carries the N6-acetyllysine modification. S-nitrosocysteine occurs at positions 62 and 69. Cysteine 73 carries the post-translational modification S-nitrosocysteine; alternate. An N6-acetyllysine; alternate modification is found at lysine 94. Lysine 94 is modified (N6-succinyllysine; alternate).

Belongs to the thioredoxin family. Homodimer; disulfide-linked. Interacts with TXNIP through the redox-active site. Interacts with MAP3K5 and CASP3. Interacts with APEX1; the interaction stimulates the FOS/JUN AP-1 DNA-binding activity in a redox-dependent manner. In the fully reduced protein, both Cys-69 and Cys-73 are nitrosylated in response to nitric oxide (NO). When two disulfide bonds are present in the protein, only Cys-73 is nitrosylated. Cys-73 can serve as donor for nitrosylation of target proteins.

Its subcellular location is the nucleus. It localises to the cytoplasm. It is found in the secreted. Its function is as follows. Participates in various redox reactions through the reversible oxidation of its active center dithiol to a disulfide and catalyzes dithiol-disulfide exchange reactions. Plays a role in the reversible S-nitrosylation of cysteine residues in target proteins, and thereby contributes to the response to intracellular nitric oxide. Nitrosylates the active site Cys of CASP3 in response to nitric oxide (NO), and thereby inhibits caspase-3 activity. Induces the FOS/JUN AP-1 DNA binding activity in ionizing radiation (IR) cells through its oxidation/reduction status and stimulates AP-1 transcriptional activity. The protein is Thioredoxin (TXN) of Bos taurus (Bovine).